Reading from the N-terminus, the 503-residue chain is UDP-N-acetylmuramoylalanine--D-glutamate ligase (503 aa).

An ATP-binding site is contributed by 129–135 (GTNGKTT).

The protein belongs to the MurCDEF family.

It localises to the cytoplasm. The enzyme catalyses UDP-N-acetyl-alpha-D-muramoyl-L-alanine + D-glutamate + ATP = UDP-N-acetyl-alpha-D-muramoyl-L-alanyl-D-glutamate + ADP + phosphate + H(+). It participates in cell wall biogenesis; peptidoglycan biosynthesis. In terms of biological role, cell wall formation. Catalyzes the addition of glutamate to the nucleotide precursor UDP-N-acetylmuramoyl-L-alanine (UMA). This chain is UDP-N-acetylmuramoylalanine--D-glutamate ligase, found in Burkholderia cenocepacia (strain HI2424).